A 376-amino-acid polypeptide reads, in one-letter code: Natterin-2 (376 aa).

An N-terminal signal peptide occupies residues 1–18 (MNLSVLLVTLLLLSWTSA). Residues 19–27 (EKDLKVRVA) constitute a propeptide that is removed on maturation.

This sequence belongs to the natterin family. Post-translationally, contains 4 disulfide bonds. In terms of tissue distribution, expressed by the venom gland.

The protein localises to the secreted. With respect to regulation, inhibited by tissue-kallikrein inhibitor TKI and trasylol. Plasma kallikrein inhibitor PKSI527 and classical inhibitors of serine-, metallo-, thiol- or aspartate-peptidases evokes a minor inhibition of the peptide digestion. Functionally, shows nociceptive, edema-inducing and kininogenase activity with release of kallidin from low molecular weight kininogen. The cleavage occurs at Met-Lys bonds. This chain is Natterin-2, found in Thalassophryne nattereri (Copper Joe toadfish).